A 463-amino-acid polypeptide reads, in one-letter code: Maintenance of mitochondrial morphology protein 1-2 (463 aa).

Residues 1–23 (MVIPAELIQKALKQQSGWGFTEG) lie on the Lumenal side of the membrane. Residues 24–44 (LVLGQLSVIITVIIILKFVIF) form a helical membrane-spanning segment. Over 45 to 463 (AENKSPKKGN…TGADTASGSS (419 aa)) the chain is Cytoplasmic. The segment at 72 to 152 (GGQTANGVKT…VAGSTSNLAV (81 aa)) is disordered. Polar residues predominate over residues 108 to 122 (RPGSSRVSMVRSTSG). One can recognise an SMP-LTD domain in the interval 205–435 (APESLDWFNV…EPHQMIFILP (231 aa)).

Belongs to the MMM1 family. As to quaternary structure, homodimer. Component of the ER-mitochondria encounter structure (ERMES) or MDM complex, composed of MMM1, MDM10, MDM12 and MDM34. An MMM1 homodimer associates with one molecule of MDM12 on each side in a pairwise head-to-tail manner, and the SMP-LTD domains of MMM1 and MDM12 generate a continuous hydrophobic tunnel for phospholipid trafficking.

The protein localises to the endoplasmic reticulum membrane. In terms of biological role, component of the ERMES/MDM complex, which serves as a molecular tether to connect the endoplasmic reticulum (ER) and mitochondria. Components of this complex are involved in the control of mitochondrial shape and protein biogenesis, and function in nonvesicular lipid trafficking between the ER and mitochondria. The MDM12-MMM1 subcomplex functions in the major beta-barrel assembly pathway that is responsible for biogenesis of all outer membrane beta-barrel proteins, and acts in a late step after the SAM complex. The MDM10-MDM12-MMM1 subcomplex further acts in the TOM40-specific pathway after the action of the MDM12-MMM1 complex. Essential for establishing and maintaining the structure of mitochondria and maintenance of mtDNA nucleoids. This Yarrowia lipolytica (strain CLIB 122 / E 150) (Yeast) protein is Maintenance of mitochondrial morphology protein 1-2.